Here is a 635-residue protein sequence, read N- to C-terminus: 1-deoxy-D-xylulose-5-phosphate synthase (635 aa).

Thiamine diphosphate is bound by residues His-77 and 118–120 (GHA). Residue Asp-150 coordinates Mg(2+). Residues 151–152 (AS), Asn-179, Tyr-290, and Glu-372 contribute to the thiamine diphosphate site. Asn-179 serves as a coordination point for Mg(2+).

The protein belongs to the transketolase family. DXPS subfamily. Homodimer. Requires Mg(2+) as cofactor. Thiamine diphosphate serves as cofactor.

It carries out the reaction D-glyceraldehyde 3-phosphate + pyruvate + H(+) = 1-deoxy-D-xylulose 5-phosphate + CO2. It functions in the pathway metabolic intermediate biosynthesis; 1-deoxy-D-xylulose 5-phosphate biosynthesis; 1-deoxy-D-xylulose 5-phosphate from D-glyceraldehyde 3-phosphate and pyruvate: step 1/1. Functionally, catalyzes the acyloin condensation reaction between C atoms 2 and 3 of pyruvate and glyceraldehyde 3-phosphate to yield 1-deoxy-D-xylulose-5-phosphate (DXP). The protein is 1-deoxy-D-xylulose-5-phosphate synthase of Leptospira borgpetersenii serovar Hardjo-bovis (strain JB197).